Consider the following 98-residue polypeptide: Large ribosomal subunit protein bL27 (98 aa).

Polar residues predominate over residues 1 to 11; sequence MASKASGGSTR. Positions 1–20 are disordered; that stretch reads MASKASGGSTRNGRDSISKR.

It belongs to the bacterial ribosomal protein bL27 family.

The sequence is that of Large ribosomal subunit protein bL27 from Aquifex aeolicus (strain VF5).